An 845-amino-acid chain; its full sequence is G-type lectin S-receptor-like serine/threonine-protein kinase At1g11410 (845 aa).

Residues 1–21 form the signal peptide; sequence MKFFFIFFIFLFSFLIQSCYS. The Bulb-type lectin domain maps to 22 to 147; that stretch reads DNTILRSQSL…VTGKSFWESF (126 aa). The Extracellular portion of the chain corresponds to 22 to 441; sequence DNTILRSQSL…NGNGASGKKR (420 aa). N-linked (GlcNAc...) asparagine glycosylation is found at Asn82, Asn103, Asn185, Asn231, and Asn259. In terms of domain architecture, EGF-like spans 283-321; it reads PEDKCDIYNHCGFNGYCDSTSTEKFECSCLPGYEPKTPR. Intrachain disulfides connect Cys287/Cys299 and Cys293/Cys309. Positions 341–424 constitute a PAN domain; that stretch reads CNGKEGFAKL…SGQDFYLRVD (84 aa). 3 N-linked (GlcNAc...) asparagine glycosylation sites follow: Asn357, Asn366, and Asn379. Disulfide bonds link Cys372–Cys399 and Cys376–Cys382. Residues 442–462 form a helical membrane-spanning segment; the sequence is LVLILISLIAVVMLLLISFHC. The Cytoplasmic segment spans residues 463-845; the sequence is YLRKRRQRTQ…DVTLTDVQGR (383 aa). One can recognise a Protein kinase domain in the interval 523–808; the sequence is FAFQNKLGAG…DLPSPKHPAF (286 aa). ATP contacts are provided by residues 529–537 and Lys551; that span reads LGAGGFGPV. The tract at residues 612–629 is caM-binding; sequence EQRAELDWPKRMGIIRGI. The Proton acceptor role is filled by Asp648. The disordered stretch occupies residues 803–845; sequence PKHPAFTAGRRRNTKTGGSSDNWPSGETSSTINDVTLTDVQGR. The segment covering 817 to 845 has biased composition (polar residues); the sequence is KTGGSSDNWPSGETSSTINDVTLTDVQGR.

This sequence belongs to the protein kinase superfamily. Ser/Thr protein kinase family.

The protein resides in the cell membrane. It catalyses the reaction L-seryl-[protein] + ATP = O-phospho-L-seryl-[protein] + ADP + H(+). The enzyme catalyses L-threonyl-[protein] + ATP = O-phospho-L-threonyl-[protein] + ADP + H(+). This is G-type lectin S-receptor-like serine/threonine-protein kinase At1g11410 from Arabidopsis thaliana (Mouse-ear cress).